A 308-amino-acid polypeptide reads, in one-letter code: GTP-binding protein RAD (308 aa).

Over residues methionine 1–alanine 15 the composition is skewed to gly residues. The segment at methionine 1–glycine 86 is disordered. Position 24 is an omega-N-methylarginine (arginine 24). Serine 26 bears the Phosphoserine mark. Low complexity predominate over residues alanine 57 to serine 82. GTP is bound by residues glycine 98 to serine 105 and asparagine 203 to aspartate 206. The tract at residues alanine 278–alanine 297 is calmodulin-binding.

It belongs to the small GTPase superfamily. RGK family. In terms of assembly, interacts with Calmodulin preferentially in the inactive, GDP-bound form. Interacts with CAMK2D. Interacts with CACNB2; interaction may be involved in beta-adrenergic regulation of heart rate and contractile force. Interaction with CACNB2 regulates the trafficking of CACNA1C to the cell membrane. In terms of processing, phosphorylation at Ser-26, Ser-39, Ser-273 and Ser-301 may be involved in regulating inhibition of voltage-gated L-type Ca(2+) channels.

It is found in the cell membrane. Its function is as follows. May regulate basal voltage-dependent L-type Ca(2+) currents and be required for beta-adrenergic augmentation of Ca(2+) influx in cardiomyocytes, thereby regulating increases in heart rate and contractile force. May play an important role in cardiac antiarrhythmia via the strong suppression of voltage-dependent L-type Ca(2+) currents. Regulates voltage-gated L-type calcium channel subunit alpha-1C trafficking to the cell membrane. Inhibits cardiac hypertrophy through the calmodulin-dependent kinase II (CaMKII) pathway. Inhibits phosphorylation and activation of CAMK2D. This is GTP-binding protein RAD (Rrad) from Mus musculus (Mouse).